The primary structure comprises 448 residues: Senescence/dehydration-associated protein At4g35985, chloroplastic (448 aa).

The interval M1–N36 is disordered. A chloroplast-targeting transit peptide spans M1–T56. The span at S26 to N36 shows a compositional bias: low complexity. Positions I248–A416 constitute a Senescence domain. The segment at A422–K448 is disordered. The segment covering E439–K448 has biased composition (basic residues).

In terms of tissue distribution, expressed in leaves (especially in midribs and trichomes), apical meristemic regions, stems, roots and flowers.

It is found in the plastid. The protein resides in the chloroplast. In Arabidopsis thaliana (Mouse-ear cress), this protein is Senescence/dehydration-associated protein At4g35985, chloroplastic.